The primary structure comprises 193 residues: Cytidylate kinase (193 aa).

12-20 is an ATP binding site; the sequence is GLAGSGTTT.

This sequence belongs to the cytidylate kinase family. Type 2 subfamily.

The protein localises to the cytoplasm. It carries out the reaction CMP + ATP = CDP + ADP. It catalyses the reaction dCMP + ATP = dCDP + ADP. In Thermococcus kodakarensis (strain ATCC BAA-918 / JCM 12380 / KOD1) (Pyrococcus kodakaraensis (strain KOD1)), this protein is Cytidylate kinase.